Reading from the N-terminus, the 691-residue chain is Guanylate cyclase soluble subunit alpha-1 (691 aa).

Serine 267 bears the Phosphoserine mark. The Guanylate cyclase domain maps to 480 to 607; it reads VTMLFSDIVG…GNNVTLANKF (128 aa).

The protein belongs to the adenylyl cyclase class-4/guanylyl cyclase family. As to quaternary structure, the active enzyme is formed by a heterodimer of an alpha and a beta subunit. Heterodimer with GUCY1B1. It depends on Mg(2+) as a cofactor. The cofactor is Mn(2+).

The protein resides in the cytoplasm. The enzyme catalyses GTP = 3',5'-cyclic GMP + diphosphate. Activated by nitric oxide in the presence of magnesium or manganese ions. The protein is Guanylate cyclase soluble subunit alpha-1 (Gucy1a1) of Mus musculus (Mouse).